A 395-amino-acid polypeptide reads, in one-letter code: Outer membrane protein assembly factor BamB (395 aa).

The first 20 residues, 1–20 (MKSWCKNLLAAGLSLAMLSA), serve as a signal peptide directing secretion. A lipid anchor (N-palmitoyl cysteine) is attached at Cys-21. Cys-21 carries the S-diacylglycerol cysteine lipid modification.

The protein belongs to the BamB family. Part of the Bam complex.

It localises to the cell outer membrane. Its function is as follows. Part of the outer membrane protein assembly complex, which is involved in assembly and insertion of beta-barrel proteins into the outer membrane. The sequence is that of Outer membrane protein assembly factor BamB from Shewanella oneidensis (strain ATCC 700550 / JCM 31522 / CIP 106686 / LMG 19005 / NCIMB 14063 / MR-1).